Reading from the N-terminus, the 256-residue chain is 14-3-3-like protein GF14-C (256 aa).

The protein belongs to the 14-3-3 family. As to quaternary structure, may form a complex with the transcriptional activator VP1 and the bZIP transcription factor EMBP1. As to expression, expressed in seedlings, internodes and panicles.

It localises to the cytoplasm. It is found in the nucleus. Functionally, is associated with a DNA binding complex that binds to the G box, a well-characterized cis-acting DNA regulatory element found in plant genes. The polypeptide is 14-3-3-like protein GF14-C (GF14C) (Oryza sativa subsp. japonica (Rice)).